The chain runs to 158 residues: Transcriptional repressor NrdR (158 aa).

Residues 3-34 fold into a zinc finger; it reads CPFCGSLDTQVIDSRANEAGDAIRRRRRCAAC. Residues 49-139 enclose the ATP-cone domain; sequence PQIVKTNGTR…VYKSFKDPDD (91 aa).

It belongs to the NrdR family. The cofactor is Zn(2+).

In terms of biological role, negatively regulates transcription of bacterial ribonucleotide reductase nrd genes and operons by binding to NrdR-boxes. The chain is Transcriptional repressor NrdR from Thiobacillus denitrificans (strain ATCC 25259 / T1).